The primary structure comprises 961 residues: Glycine dehydrogenase (decarboxylating) (961 aa).

Position 709 is an N6-(pyridoxal phosphate)lysine (K709).

Belongs to the GcvP family. In terms of assembly, the glycine cleavage system is composed of four proteins: P, T, L and H. Pyridoxal 5'-phosphate is required as a cofactor.

The enzyme catalyses N(6)-[(R)-lipoyl]-L-lysyl-[glycine-cleavage complex H protein] + glycine + H(+) = N(6)-[(R)-S(8)-aminomethyldihydrolipoyl]-L-lysyl-[glycine-cleavage complex H protein] + CO2. The glycine cleavage system catalyzes the degradation of glycine. The P protein binds the alpha-amino group of glycine through its pyridoxal phosphate cofactor; CO(2) is released and the remaining methylamine moiety is then transferred to the lipoamide cofactor of the H protein. In Streptomyces griseus subsp. griseus (strain JCM 4626 / CBS 651.72 / NBRC 13350 / KCC S-0626 / ISP 5235), this protein is Glycine dehydrogenase (decarboxylating).